Consider the following 216-residue polypeptide: Octanoyltransferase (216 aa).

A BPL/LPL catalytic domain is found at 31 to 205; that stretch reads STTRDEVWLV…ELVTLLDYEQ (175 aa). Residues 70–77, 137–139, and 150–152 each bind substrate; these read RGGQVTYH, SLG, and GLA. Cysteine 168 (acyl-thioester intermediate) is an active-site residue.

It belongs to the LipB family.

It is found in the cytoplasm. It catalyses the reaction octanoyl-[ACP] + L-lysyl-[protein] = N(6)-octanoyl-L-lysyl-[protein] + holo-[ACP] + H(+). It participates in protein modification; protein lipoylation via endogenous pathway; protein N(6)-(lipoyl)lysine from octanoyl-[acyl-carrier-protein]: step 1/2. Functionally, catalyzes the transfer of endogenously produced octanoic acid from octanoyl-acyl-carrier-protein onto the lipoyl domains of lipoate-dependent enzymes. Lipoyl-ACP can also act as a substrate although octanoyl-ACP is likely to be the physiological substrate. The protein is Octanoyltransferase of Vibrio cholerae serotype O1 (strain ATCC 39315 / El Tor Inaba N16961).